We begin with the raw amino-acid sequence, 258 residues long: Imidazole glycerol phosphate synthase subunit HisF (258 aa).

Residues D11 and D130 contribute to the active site.

It belongs to the HisA/HisF family. In terms of assembly, heterodimer of HisH and HisF.

Its subcellular location is the cytoplasm. The catalysed reaction is 5-[(5-phospho-1-deoxy-D-ribulos-1-ylimino)methylamino]-1-(5-phospho-beta-D-ribosyl)imidazole-4-carboxamide + L-glutamine = D-erythro-1-(imidazol-4-yl)glycerol 3-phosphate + 5-amino-1-(5-phospho-beta-D-ribosyl)imidazole-4-carboxamide + L-glutamate + H(+). It functions in the pathway amino-acid biosynthesis; L-histidine biosynthesis; L-histidine from 5-phospho-alpha-D-ribose 1-diphosphate: step 5/9. Functionally, IGPS catalyzes the conversion of PRFAR and glutamine to IGP, AICAR and glutamate. The HisF subunit catalyzes the cyclization activity that produces IGP and AICAR from PRFAR using the ammonia provided by the HisH subunit. This Photorhabdus laumondii subsp. laumondii (strain DSM 15139 / CIP 105565 / TT01) (Photorhabdus luminescens subsp. laumondii) protein is Imidazole glycerol phosphate synthase subunit HisF.